A 217-amino-acid chain; its full sequence is Uracil-DNA glycosylase (217 aa).

D62 functions as the Proton acceptor in the catalytic mechanism.

This sequence belongs to the uracil-DNA glycosylase (UDG) superfamily. UNG family.

Its subcellular location is the cytoplasm. The catalysed reaction is Hydrolyzes single-stranded DNA or mismatched double-stranded DNA and polynucleotides, releasing free uracil.. In terms of biological role, excises uracil residues from the DNA which can arise as a result of misincorporation of dUMP residues by DNA polymerase or due to deamination of cytosine. This is Uracil-DNA glycosylase from Streptococcus sanguinis (strain SK36).